A 776-amino-acid polypeptide reads, in one-letter code: Probable exo-1,4-beta-xylosidase bxlB (776 aa).

An N-terminal signal peptide occupies residues 1–23 (MVHLSPLLRPLAAFSFFTSLAST). Asn-65 and Asn-105 each carry an N-linked (GlcNAc...) asparagine glycan. Asp-291 is an active-site residue. N-linked (GlcNAc...) asparagine glycosylation is found at Asn-343, Asn-410, Asn-421, Asn-462, Asn-623, and Asn-766.

This sequence belongs to the glycosyl hydrolase 3 family.

The protein resides in the secreted. The enzyme catalyses Hydrolysis of (1-&gt;4)-beta-D-xylans, to remove successive D-xylose residues from the non-reducing termini.. Its pathway is glycan degradation; xylan degradation. Xylan 1,4-beta-xylosidase involved in the hydrolysis of xylan, a major structural heterogeneous polysaccharide found in plant biomass representing the second most abundant polysaccharide in the biosphere, after cellulose. The chain is Probable exo-1,4-beta-xylosidase bxlB (bxlB) from Aspergillus flavus (strain ATCC 200026 / FGSC A1120 / IAM 13836 / NRRL 3357 / JCM 12722 / SRRC 167).